The following is a 610-amino-acid chain: Granule-bound starch synthase 1, chloroplastic/amyloplastic (610 aa).

The transit peptide at 1-79 (MATVTASSNF…SKVKTAGKIV (79 aa)) directs the protein to the chloroplast. An ADP-alpha-D-glucose-binding site is contributed by Lys-98. Residues 438-454 (TGKKKMEAQILELEEKF) adopt a coiled-coil conformation.

The protein belongs to the glycosyltransferase 1 family. Bacterial/plant glycogen synthase subfamily. As to quaternary structure, interacts with PTST. This interaction is critical for the localization to starch granules. As to expression, expressed in roots, inflorescences, flowers, fruits and at much higher levels in leaves.

The protein localises to the plastid. It is found in the chloroplast. It catalyses the reaction an NDP-alpha-D-glucose + [(1-&gt;4)-alpha-D-glucosyl](n) = [(1-&gt;4)-alpha-D-glucosyl](n+1) + a ribonucleoside 5'-diphosphate + H(+). The protein operates within glycan biosynthesis; starch biosynthesis. Functionally, required for the synthesis of amylose. Destroyed as it is released from the starch granules during the night. The circadian expression is controlled by CCA1 and LHY transcription factors. The chain is Granule-bound starch synthase 1, chloroplastic/amyloplastic from Arabidopsis thaliana (Mouse-ear cress).